A 504-amino-acid chain; its full sequence is Peroxisomal N(1)-acetyl-spermine/spermidine oxidase (504 aa).

Residues A16, E37, R45, and 61–62 contribute to the FAD site; that span reads HW. Residues H64 and V187 each contribute to the substrate site. V240 is an FAD binding site. A substrate-binding site is contributed by N313. Residues E465 and 474–475 contribute to the FAD site; that span reads TT. The short motif at 502 to 504 is the Microbody targeting signal element; it reads PRL.

This sequence belongs to the flavin monoamine oxidase family. As to quaternary structure, monomer. The cofactor is FAD. In terms of tissue distribution, widely expressed at different developmental stages. Expressed at high level in the liver and the stomach, expressed at lower level in heart, spleen, thymus, small intestine, muscle, pancreas, uterus, and breast and expressed at very low level in brain, kidney, lung, testis, skin, adrenal gland and prostate gland.

The protein resides in the peroxisome. It localises to the cytoplasm. It catalyses the reaction N(1)-acetylspermine + O2 + H2O = 3-acetamidopropanal + spermidine + H2O2. The catalysed reaction is N(1)-acetylspermidine + O2 + H2O = 3-acetamidopropanal + putrescine + H2O2. The enzyme catalyses N(1),N(12)-diacetylspermine + O2 + H2O = 3-acetamidopropanal + N(1)-acetylspermidine + H2O2. It functions in the pathway amine and polyamine metabolism; spermine metabolism. Its function is as follows. Flavoenzyme which catalyzes the oxidation of N(1)-acetylspermine to spermidine and is thus involved in the polyamine back-conversion. Can also oxidize N(1)-acetylspermidine to putrescine. Substrate specificity: N(1)-acetylspermine = N(1)-acetylspermidine &gt; N(1),N(12)-diacylspermine &gt;&gt; spermine. Does not oxidize spermidine. Plays an important role in the regulation of polyamine intracellular concentration and has the potential to act as a determinant of cellular sensitivity to the antitumor polyamine analogs. The protein is Peroxisomal N(1)-acetyl-spermine/spermidine oxidase (Paox) of Mus musculus (Mouse).